The chain runs to 356 residues: DNA polymerase IV (356 aa).

The region spanning 1–188 is the UmuC domain; it reads MDTSRKIIHI…IPVTKFYGVG (188 aa). Asp11 and Asp106 together coordinate Mg(2+). Glu107 is an active-site residue.

This sequence belongs to the DNA polymerase type-Y family. As to quaternary structure, monomer. Requires Mg(2+) as cofactor.

It is found in the cytoplasm. The enzyme catalyses DNA(n) + a 2'-deoxyribonucleoside 5'-triphosphate = DNA(n+1) + diphosphate. In terms of biological role, poorly processive, error-prone DNA polymerase involved in untargeted mutagenesis. Copies undamaged DNA at stalled replication forks, which arise in vivo from mismatched or misaligned primer ends. These misaligned primers can be extended by PolIV. Exhibits no 3'-5' exonuclease (proofreading) activity. May be involved in translesional synthesis, in conjunction with the beta clamp from PolIII. In Listeria monocytogenes serotype 4b (strain F2365), this protein is DNA polymerase IV.